Here is a 500-residue protein sequence, read N- to C-terminus: Taxoid 7-beta-hydroxylase (500 aa).

Residues 24 to 44 form a helical membrane-spanning segment; that stretch reads PAILSTALTAIAGIIVLLVIT. Cys446 is a heme binding site.

It belongs to the cytochrome P450 family.

It localises to the microsome membrane. It carries out the reaction taxusin + reduced [NADPH--hemoprotein reductase] + O2 = 7beta-hydroxytaxusin + oxidized [NADPH--hemoprotein reductase] + H2O + H(+). The enzyme catalyses 2alpha-hydroxytaxusin + reduced [NADPH--hemoprotein reductase] + O2 = 2alpha,7beta-dihydroxytaxusin + oxidized [NADPH--hemoprotein reductase] + H2O + H(+). It catalyses the reaction 7beta-hydroxytaxusin + reduced [NADPH--hemoprotein reductase] + O2 = 2alpha,7beta-dihydroxytaxusin + oxidized [NADPH--hemoprotein reductase] + H2O + H(+). It functions in the pathway alkaloid biosynthesis; taxol biosynthesis. Functionally, catalyzes the conversion of taxusin to 7-beta-hydroxytaxusin in taxol biosynthesis. Catalyzes the conversion of 2-alpha-hydroxytaxusin to 2-alpha-7-beta-hydroxytaxusin in taxol biosynthesis. The chain is Taxoid 7-beta-hydroxylase from Taxus cuspidata (Japanese yew).